A 279-amino-acid polypeptide reads, in one-letter code: Ribosomal RNA small subunit methyltransferase A (279 aa).

The S-adenosyl-L-methionine site is built by Asn28, Leu30, Gly55, Glu77, Asp103, and Asn122.

It belongs to the class I-like SAM-binding methyltransferase superfamily. rRNA adenine N(6)-methyltransferase family. RsmA subfamily.

The protein resides in the cytoplasm. The enzyme catalyses adenosine(1518)/adenosine(1519) in 16S rRNA + 4 S-adenosyl-L-methionine = N(6)-dimethyladenosine(1518)/N(6)-dimethyladenosine(1519) in 16S rRNA + 4 S-adenosyl-L-homocysteine + 4 H(+). In terms of biological role, specifically dimethylates two adjacent adenosines (A1518 and A1519) in the loop of a conserved hairpin near the 3'-end of 16S rRNA in the 30S particle. May play a critical role in biogenesis of 30S subunits. This is Ribosomal RNA small subunit methyltransferase A from Ruegeria pomeroyi (strain ATCC 700808 / DSM 15171 / DSS-3) (Silicibacter pomeroyi).